The following is a 469-amino-acid chain: MNPNQKIITIGSVSLTIATICFLMQIAILVTTVTLHFKQYECDSPANNQVMPCEPIIIERNITEIVYLTNTTIEKEICPKLVEYRNWSKPQCKITGFAPFSKDNSIRLSAGGDIWVTREPYVSCDPGKCYQFALGQGTTLDNKHSNDTIHDRTPHRTLLMNELGVPFHLGTRQVCIAWSSSSCHDGKAWLHVCVTGYDKNATASFIYDGRLVDSIGSWSKNILRTQESECVCINGTCTVVMTDGSASERADTKILFIEEGKIVHISPLSGSAQHVEECSCYPRYPGVRCVCRDNWKGSNRPVVDINVKDYSIASSYVCSGLVGDTPRKNDRYSSSYCRNPNNEKGNHGVKGWAFDDGNDVWMGRTISDESRSGYETFKVIGGWSTPNSKLQINRQVIVDSDNRSGYSGIFSVEGKSCINRCFYVELIRGREQETRVWWTSNSIVVFCGTSGTYGTGSWPDGADINLMPI.

Residues 1 to 9 (MNPNQKIIT) lie on the Intravirion side of the membrane. Residues 10–30 (IGSVSLTIATICFLMQIAILV) form a helical membrane-spanning segment. Residues 11–33 (GSVSLTIATICFLMQIAILVTTV) form an involved in apical transport and lipid raft association region. The Virion surface segment spans residues 31 to 469 (TTVTLHFKQY…DGADINLMPI (439 aa)). Residues 36–88 (HFKQYECDSPANNQVMPCEPIIIERNITEIVYLTNTTIEKEICPKLVEYRNWS) are hypervariable stalk region. N-linked (GlcNAc...) asparagine; by host glycans are attached at residues asparagine 61, asparagine 70, and asparagine 86. Residues 91–469 (QCKITGFAPF…DGADINLMPI (379 aa)) form a head of neuraminidase region. 8 disulfides stabilise this stretch: cysteine 92/cysteine 417, cysteine 124/cysteine 129, cysteine 183/cysteine 230, cysteine 232/cysteine 237, cysteine 278/cysteine 291, cysteine 280/cysteine 289, cysteine 318/cysteine 337, and cysteine 421/cysteine 447. Arginine 118 lines the substrate pocket. N-linked (GlcNAc...) asparagine; by host glycosylation is present at asparagine 146. Catalysis depends on aspartate 151, which acts as the Proton donor/acceptor. Arginine 152 lines the substrate pocket. 2 N-linked (GlcNAc...) asparagine; by host glycosylation sites follow: asparagine 200 and asparagine 234. Substrate is bound at residue 276 to 277 (EE). Residue arginine 292 coordinates substrate. Ca(2+) is bound by residues aspartate 293, glycine 297, and aspartate 324. Arginine 371 contributes to the substrate binding site. N-linked (GlcNAc...) asparagine; by host glycosylation is present at asparagine 402. Residue tyrosine 406 is the Nucleophile of the active site.

The protein belongs to the glycosyl hydrolase 34 family. Homotetramer. Ca(2+) is required as a cofactor. N-glycosylated.

The protein resides in the virion membrane. Its subcellular location is the host apical cell membrane. It carries out the reaction Hydrolysis of alpha-(2-&gt;3)-, alpha-(2-&gt;6)-, alpha-(2-&gt;8)- glycosidic linkages of terminal sialic acid residues in oligosaccharides, glycoproteins, glycolipids, colominic acid and synthetic substrates.. Inhibited by the neuraminidase inhibitors zanamivir (Relenza) and oseltamivir (Tamiflu). These drugs interfere with the release of progeny virus from infected cells and are effective against all influenza strains. Resistance to neuraminidase inhibitors is quite rare. Functionally, catalyzes the removal of terminal sialic acid residues from viral and cellular glycoconjugates. Cleaves off the terminal sialic acids on the glycosylated HA during virus budding to facilitate virus release. Additionally helps virus spread through the circulation by further removing sialic acids from the cell surface. These cleavages prevent self-aggregation and ensure the efficient spread of the progeny virus from cell to cell. Otherwise, infection would be limited to one round of replication. Described as a receptor-destroying enzyme because it cleaves a terminal sialic acid from the cellular receptors. May facilitate viral invasion of the upper airways by cleaving the sialic acid moieties on the mucin of the airway epithelial cells. Likely to plays a role in the budding process through its association with lipid rafts during intracellular transport. May additionally display a raft-association independent effect on budding. Plays a role in the determination of host range restriction on replication and virulence. Sialidase activity in late endosome/lysosome traffic seems to enhance virus replication. This is Neuraminidase from Influenza A virus (strain A/Memphis/2/1978 H3N2).